The following is a 514-amino-acid chain: Probable lysine--tRNA ligase, cytoplasmic (514 aa).

The protein belongs to the class-II aminoacyl-tRNA synthetase family. Homodimer.

The protein resides in the cytoplasm. It catalyses the reaction tRNA(Lys) + L-lysine + ATP = L-lysyl-tRNA(Lys) + AMP + diphosphate. The chain is Probable lysine--tRNA ligase, cytoplasmic from Vairimorpha ceranae (strain BRL01) (Microsporidian parasite).